The following is a 133-amino-acid chain: GKAFDDGAFTGIREINLSYNKETAIGDFQVVYDLNGSPYVGQNHKSFITGFTPVKISLDFPSEYIMEVSGYTGNVSGYVVVRSLTFKTNKKTYGPYGVTSGTPFNLPIENGLIVGFKGSIGYWLDYFSMYLSL.

The Jacalin-type lectin domain occupies 1–133 (GKAFDDGAFT…LDYFSMYLSL (133 aa)). Positions 7–64 (GAFTGIREINLSYNKETAIGDFQVVYDLNGSPYVGQNHKSFITGFTPVKISLDFPSEY) form a repeat. N-linked (GlcNAc...) asparagine; when associated with variant T-45; partial glycosylation occurs at asparagine 43. Residues 68 to 89 (VSGYTGNVSGYVVVRSLTFKTN) form an igA-binding region. A glycan (N-linked (GlcNAc...) asparagine; partial) is linked at asparagine 74. Residues 76–130 (SGYVVVRSLTFKTNKKTYGPYGVTSGTPFNLPIENGLIVGFKGSIGYWLDYFSMY) constitute a repeat.

It belongs to the jacalin lectin family. Tetramer of four alpha chains associated with two or four beta chains.

D-galactose-specific lectin, binds the T-antigen structure Gal-beta1,3-GalNAc (Thomsen-Friedenreich-antigen-specific lectin). Potent and selective stimulant of distinct T- and B-cell functions. Shows a unique ability to specifically recognize IgA-1 from human serum. The protein is Agglutinin alpha chain of Artocarpus integer (Jack fruit).